The following is a 111-amino-acid chain: uncharacterized protein (111 aa).

Residues 4 to 51 (LGQVKVLEEKVAKAVHLVQMLKEENAALRAEIDGRGKRITELEQLVLX) adopt a coiled-coil conformation.

This is an uncharacterized protein from Treponema pallidum (strain Nichols).